The chain runs to 226 residues: Transmembrane gamma-carboxyglutamic acid protein 4 (226 aa).

The first 17 residues, 1 to 17, serve as a signal peptide directing secretion; sequence MFTLLVLLSQLPTVTLG. Positions 18–49 are excised as a propeptide; sequence FPHCARGPKASKHAGEEVFTSKEEANFFIHRR. Topologically, residues 50–113 are extracellular; it reads LLYNRFDLEL…KSDGNREKID (64 aa). In terms of domain architecture, Gla spans 52–98; the sequence is YNRFDLELFTPGNLERECNEELCNYEEAREIFVDEDKTIAFWQEYSA. A disulfide bridge links cysteine 69 with cysteine 74. Position 72 is a 4-carboxyglutamate (glutamate 72). The chain crosses the membrane as a helical span at residues 114–134; it reads VMGLLTGLIAAGVFLVIFGLL. Residues 135 to 226 are Cytoplasmic-facing; it reads GYYLCITKCN…FKKSMSLPSH (92 aa). Serine 163 bears the Phosphoserine mark. Residues 186-189 carry the LPXY motif; mediates binding to WW domain-containing proteins motif; sequence LPSY. A PPXY motif; mediates binding to WW domain-containing proteins motif is present at residues 204–207; sequence PPPY.

It belongs to the commissureless family. As to quaternary structure, interacts (via cytoplasmic domain) with WW domain-containing proteins MAGI1, MAGI3, NEDD4, NEDD4L, WWTR1/TAZ and YAP1. Gamma-carboxyglutamate residues are formed by vitamin K dependent carboxylation. These residues are essential for the binding of calcium. In terms of tissue distribution, widely expressed with highest levels in kidney.

Its subcellular location is the endoplasmic reticulum-Golgi intermediate compartment membrane. The protein resides in the cell membrane. In terms of biological role, may control axon guidance across the CNS. Prevents the delivery of ROBO1 at the cell surface and down-regulates its expression. This Homo sapiens (Human) protein is Transmembrane gamma-carboxyglutamic acid protein 4.